The primary structure comprises 223 residues: MDDDISLPADTLAILNEFLLERSKREAEEENQIANKTGKDAQFEEDWQLSQFWYSTETKHALRDVVRKLLAERTEDSGDFSIALLSCPSLYKDIREIHDTVHIFEFDKRFEAYGTDFVHYDLNCVGSNPDYLKEHHQQYDLIVADPPFLSQECIAKTCEIITRLQRNQKESKVILCSGEVVEPWLTARLPVLKCSFRPEHERNLGNKFVSYANFNLDEYIENK.

Belongs to the class I-like SAM-binding methyltransferase superfamily. EFM5 family.

Its subcellular location is the cytoplasm. In terms of biological role, S-adenosyl-L-methionine-dependent protein-lysine N-methyltransferase that methylates elongation factor 1-alpha. The protein is Protein-lysine N-methyltransferase CG9154 of Drosophila melanogaster (Fruit fly).